The sequence spans 408 residues: Succinylornithine transaminase (408 aa).

Lysine 252 carries the N6-(pyridoxal phosphate)lysine modification.

This sequence belongs to the class-III pyridoxal-phosphate-dependent aminotransferase family. AstC subfamily. Pyridoxal 5'-phosphate serves as cofactor.

The catalysed reaction is N(2)-succinyl-L-ornithine + 2-oxoglutarate = N-succinyl-L-glutamate 5-semialdehyde + L-glutamate. Its pathway is amino-acid degradation; L-arginine degradation via AST pathway; L-glutamate and succinate from L-arginine: step 3/5. Its function is as follows. Catalyzes the transamination of N(2)-succinylornithine and alpha-ketoglutarate into N(2)-succinylglutamate semialdehyde and glutamate. Can also act as an acetylornithine aminotransferase. This Salmonella newport (strain SL254) protein is Succinylornithine transaminase.